The following is a 175-amino-acid chain: Inosine/xanthosine triphosphatase (175 aa).

8–13 contacts substrate; sequence TTNPAK. 2 residues coordinate Mg(2+): Asp38 and Glu68. Residue 68–69 participates in substrate binding; sequence EA.

The protein belongs to the YjjX NTPase family. Homodimer. It depends on Mg(2+) as a cofactor. Mn(2+) is required as a cofactor.

The enzyme catalyses XTP + H2O = XDP + phosphate + H(+). It catalyses the reaction ITP + H2O = IDP + phosphate + H(+). Functionally, phosphatase that hydrolyzes non-canonical purine nucleotides such as XTP and ITP to their respective diphosphate derivatives. Probably excludes non-canonical purines from DNA/RNA precursor pool, thus preventing their incorporation into DNA/RNA and avoiding chromosomal lesions. This chain is Inosine/xanthosine triphosphatase, found in Yersinia enterocolitica serotype O:8 / biotype 1B (strain NCTC 13174 / 8081).